A 141-amino-acid chain; its full sequence is Small ribosomal subunit protein eS17w (141 aa).

This sequence belongs to the eukaryotic ribosomal protein eS17 family.

This chain is Small ribosomal subunit protein eS17w (RPS17D), found in Arabidopsis thaliana (Mouse-ear cress).